The following is a 289-amino-acid chain: ATP synthase subunit a (289 aa).

6 consecutive transmembrane segments (helical) span residues 43–63, 101–121, 160–180, 193–213, 232–252, and 259–279; these read AFHV…VLIF, SAVI…MNAV, LSVF…GGFI, LFVQ…TLIA, VFIL…GLGV, and AVFH…LTIV.

Belongs to the ATPase A chain family. As to quaternary structure, F-type ATPases have 2 components, CF(1) - the catalytic core - and CF(0) - the membrane proton channel. CF(1) has five subunits: alpha(3), beta(3), gamma(1), delta(1), epsilon(1). CF(0) has three main subunits: a(1), b(2) and c(9-12). The alpha and beta chains form an alternating ring which encloses part of the gamma chain. CF(1) is attached to CF(0) by a central stalk formed by the gamma and epsilon chains, while a peripheral stalk is formed by the delta and b chains.

It is found in the cell inner membrane. Functionally, key component of the proton channel; it plays a direct role in the translocation of protons across the membrane. In Pseudomonas syringae pv. syringae (strain B728a), this protein is ATP synthase subunit a.